A 530-amino-acid chain; its full sequence is Calnexin homolog 1 (530 aa).

A signal peptide spans 1–20 (MRQRQLFSVFLLLLAFVSFQ). Topologically, residues 21-466 (KLCYCDDQTV…EKAEQQPNLT (446 aa)) are lumenal. Residues Ser34 and Asp65 each contribute to the Ca(2+) site. A disulfide bond links Cys108 and Cys143. Residues Tyr112, Lys114, Tyr134, and Asp141 each coordinate an alpha-D-glucoside. The segment at 216–315 (ALIPAKTIPD…KCEAAPGCGE (100 aa)) is disordered. The tract at residues 223-356 (IPDPEDKKPE…RDIPNPDYFE (134 aa)) is p domain (Extended arm). Basic and acidic residues predominate over residues 224–240 (PDPEDKKPEDWDERAKI). 5 tandem repeats follow at residues 225 to 236 (DPEDKKPEDWDE), 242 to 253 (DPNAVKPEDWDE), 261 to 272 (DEEAEKPEGWLD), 280 to 291 (DPEATKPEDWDD), and 295 to 305 (GMWEAPKIDNP). 2 4 X approximate repeats regions span residues 225–291 (DPED…DWDD) and 295–352 (GMWE…IPNP). Acidic residues predominate over residues 250–281 (DWDEDAPMEIEDEEAEKPEGWLDDEPEEVDDP). A disulfide bridge links Cys307 with Cys313. A run of 3 repeats spans residues 314 to 324 (GEWKRPMKRNP), 328 to 338 (GKWSSPLIDNP), and 342 to 352 (GIWKPRDIPNP). Glu371 is an an alpha-D-glucoside binding site. A Ca(2+)-binding site is contributed by Asp382. The N-linked (GlcNAc...) asparagine glycan is linked to Asn464. The helical transmembrane segment at 467-487 (IGVLVAIVVVFFSLFLKLIFG) threads the bilayer. The Cytoplasmic portion of the chain corresponds to 488–530 (GKKAAAPVEKKKPEVAESSKSGDEAEKKEETAAPRKRQPRRDN). The segment at 490-530 (KAAAPVEKKKPEVAESSKSGDEAEKKEETAAPRKRQPRRDN) is disordered. Positions 495–520 (VEKKKPEVAESSKSGDEAEKKEETAA) are enriched in basic and acidic residues. A Phosphoserine modification is found at Ser508. Positions 521–530 (PRKRQPRRDN) are enriched in basic residues.

It belongs to the calreticulin family.

The protein resides in the endoplasmic reticulum membrane. Its function is as follows. Calcium-binding protein that interacts with newly synthesized monoglucosylated glycoproteins in the endoplasmic reticulum. It may act in assisting protein assembly and/or in the retention within the ER of unassembled protein subunits. It seems to play a major role in the quality control apparatus of the ER by the retention of incorrectly folded proteins. This chain is Calnexin homolog 1 (CNX1), found in Arabidopsis thaliana (Mouse-ear cress).